A 352-amino-acid chain; its full sequence is Protein-glutamate methylesterase/protein-glutamine glutaminase 1 (352 aa).

The region spanning 5 to 122 is the Response regulatory domain; it reads KVLVVDDSAF…SLDVLSVKEE (118 aa). At Asp-56 the chain carries 4-aspartylphosphate. Positions 155–352 constitute a CheB-type methylesterase domain; that stretch reads PDQDRKLNKL…EITEEVLSML (198 aa). Residues Ser-170, His-197, and Asp-297 contribute to the active site.

The protein belongs to the CheB family. Post-translationally, phosphorylated by CheA. Phosphorylation of the N-terminal regulatory domain activates the methylesterase activity.

The protein resides in the cytoplasm. It catalyses the reaction [protein]-L-glutamate 5-O-methyl ester + H2O = L-glutamyl-[protein] + methanol + H(+). It carries out the reaction L-glutaminyl-[protein] + H2O = L-glutamyl-[protein] + NH4(+). In terms of biological role, involved in chemotaxis. Part of a chemotaxis signal transduction system that modulates chemotaxis in response to various stimuli. Catalyzes the demethylation of specific methylglutamate residues introduced into the chemoreceptors (methyl-accepting chemotaxis proteins or MCP) by CheR. Also mediates the irreversible deamidation of specific glutamine residues to glutamic acid. In Syntrophomonas wolfei subsp. wolfei (strain DSM 2245B / Goettingen), this protein is Protein-glutamate methylesterase/protein-glutamine glutaminase 1.